A 285-amino-acid polypeptide reads, in one-letter code: tRNA (guanine-N(7)-)-methyltransferase (285 aa).

S-adenosyl-L-methionine is bound by residues glycine 102, 125–126, 160–161, and cysteine 180; these read EI and NA. Aspartate 183 is a catalytic residue. Position 258–260 (258–260) interacts with S-adenosyl-L-methionine; that stretch reads TEE.

It belongs to the class I-like SAM-binding methyltransferase superfamily. TrmB family. As to quaternary structure, forms a complex with TRM82.

Its subcellular location is the nucleus. The catalysed reaction is guanosine(46) in tRNA + S-adenosyl-L-methionine = N(7)-methylguanosine(46) in tRNA + S-adenosyl-L-homocysteine. The protein operates within tRNA modification; N(7)-methylguanine-tRNA biosynthesis. In terms of biological role, catalyzes the formation of N(7)-methylguanine at position 46 (m7G46) in tRNA. This is tRNA (guanine-N(7)-)-methyltransferase from Candida glabrata (strain ATCC 2001 / BCRC 20586 / JCM 3761 / NBRC 0622 / NRRL Y-65 / CBS 138) (Yeast).